The sequence spans 211 residues: RNA chaperone ProQ (211 aa).

The segment at 112–148 is disordered; the sequence is ERRAVEKANNPKANKKRSVHHSGNKSENKKSAGKKFS. Basic residues predominate over residues 124-134; the sequence is ANKKRSVHHSG.

The protein belongs to the ProQ family.

It is found in the cytoplasm. RNA chaperone with significant RNA binding, RNA strand exchange and RNA duplexing activities. In Histophilus somni (strain 2336) (Haemophilus somnus), this protein is RNA chaperone ProQ.